The sequence spans 891 residues: Alanine--tRNA ligase (891 aa).

4 residues coordinate Zn(2+): His-564, His-568, Cys-677, and His-681.

This sequence belongs to the class-II aminoacyl-tRNA synthetase family. Requires Zn(2+) as cofactor.

Its subcellular location is the cytoplasm. The enzyme catalyses tRNA(Ala) + L-alanine + ATP = L-alanyl-tRNA(Ala) + AMP + diphosphate. Functionally, catalyzes the attachment of alanine to tRNA(Ala) in a two-step reaction: alanine is first activated by ATP to form Ala-AMP and then transferred to the acceptor end of tRNA(Ala). Also edits incorrectly charged Ser-tRNA(Ala) and Gly-tRNA(Ala) via its editing domain. This chain is Alanine--tRNA ligase, found in Bradyrhizobium sp. (strain ORS 278).